The following is a 136-amino-acid chain: ATP synthase epsilon chain 2 (136 aa).

The protein belongs to the ATPase epsilon chain family. In terms of assembly, F-type ATPases have 2 components, CF(1) - the catalytic core - and CF(0) - the membrane proton channel. CF(1) has five subunits: alpha(3), beta(3), gamma(1), delta(1), epsilon(1). CF(0) has three main subunits: a, b and c.

It localises to the cell inner membrane. Its function is as follows. Produces ATP from ADP in the presence of a proton gradient across the membrane. The chain is ATP synthase epsilon chain 2 from Nitrobacter hamburgensis (strain DSM 10229 / NCIMB 13809 / X14).